The chain runs to 1403 residues: DNA-directed RNA polymerase subunit beta' (1403 aa).

Positions 70, 72, 85, and 88 each coordinate Zn(2+). The Mg(2+) site is built by Asp461, Asp463, and Asp465. Zn(2+) contacts are provided by Cys816, Cys890, Cys897, and Cys900.

It belongs to the RNA polymerase beta' chain family. The RNAP catalytic core consists of 2 alpha, 1 beta, 1 beta' and 1 omega subunit. When a sigma factor is associated with the core the holoenzyme is formed, which can initiate transcription. Requires Mg(2+) as cofactor. Zn(2+) is required as a cofactor.

It catalyses the reaction RNA(n) + a ribonucleoside 5'-triphosphate = RNA(n+1) + diphosphate. Functionally, DNA-dependent RNA polymerase catalyzes the transcription of DNA into RNA using the four ribonucleoside triphosphates as substrates. The chain is DNA-directed RNA polymerase subunit beta' from Dechloromonas aromatica (strain RCB).